We begin with the raw amino-acid sequence, 413 residues long: Gamma-glutamyl phosphate reductase (413 aa).

Belongs to the gamma-glutamyl phosphate reductase family.

The protein localises to the cytoplasm. The catalysed reaction is L-glutamate 5-semialdehyde + phosphate + NADP(+) = L-glutamyl 5-phosphate + NADPH + H(+). It functions in the pathway amino-acid biosynthesis; L-proline biosynthesis; L-glutamate 5-semialdehyde from L-glutamate: step 2/2. In terms of biological role, catalyzes the NADPH-dependent reduction of L-glutamate 5-phosphate into L-glutamate 5-semialdehyde and phosphate. The product spontaneously undergoes cyclization to form 1-pyrroline-5-carboxylate. This chain is Gamma-glutamyl phosphate reductase, found in Anoxybacillus flavithermus (strain DSM 21510 / WK1).